The following is an 89-amino-acid chain: Small ribosomal subunit protein uS15 (89 aa).

Belongs to the universal ribosomal protein uS15 family. As to quaternary structure, part of the 30S ribosomal subunit. Forms a bridge to the 50S subunit in the 70S ribosome, contacting the 23S rRNA.

Its function is as follows. One of the primary rRNA binding proteins, it binds directly to 16S rRNA where it helps nucleate assembly of the platform of the 30S subunit by binding and bridging several RNA helices of the 16S rRNA. Functionally, forms an intersubunit bridge (bridge B4) with the 23S rRNA of the 50S subunit in the ribosome. The polypeptide is Small ribosomal subunit protein uS15 (Ligilactobacillus salivarius (strain UCC118) (Lactobacillus salivarius)).